Consider the following 228-residue polypeptide: Cytidylate kinase (228 aa).

Residue 12-20 (GPSGSGKGT) coordinates ATP.

Belongs to the cytidylate kinase family. Type 1 subfamily.

The protein resides in the cytoplasm. The catalysed reaction is CMP + ATP = CDP + ADP. The enzyme catalyses dCMP + ATP = dCDP + ADP. The protein is Cytidylate kinase of Pseudomonas entomophila (strain L48).